A 156-amino-acid chain; its full sequence is PopC secretion inhibitor (156 aa).

The segment at 1-89 (MNPGSAPWER…PVRSRAEVHQ (89 aa)) is disordered. The span at 8 to 28 (WERRTRERMRAMSRKNGEWGD) shows a compositional bias: basic and acidic residues.

In terms of assembly, interacts with PopC in non-starving cells.

Its subcellular location is the cytoplasm. In response to starvation, RelA is activated resulting in the accumulation of (p)ppGpp, which causes the degradation of PopD in an FtsH(D)-dependent manner, thereby releasing pre-formed PopC for secretion. In terms of biological role, inhibitor of protease PopC. In non-starving cells, forms a cytoplasmic complex with PopC and inhibits PopC secretion and activity. This Myxococcus xanthus (strain DK1622) protein is PopC secretion inhibitor.